Reading from the N-terminus, the 403-residue chain is Phosphoglycerate kinase (403 aa).

Substrate is bound by residues 21–23 (DFN), arginine 36, 59–62 (HLGR), arginine 119, and arginine 154. Residues lysine 207, glycine 299, glutamate 330, and 357–360 (GGDA) contribute to the ATP site.

It belongs to the phosphoglycerate kinase family. Monomer.

The protein localises to the cytoplasm. It carries out the reaction (2R)-3-phosphoglycerate + ATP = (2R)-3-phospho-glyceroyl phosphate + ADP. Its pathway is carbohydrate degradation; glycolysis; pyruvate from D-glyceraldehyde 3-phosphate: step 2/5. In Chlamydia abortus (strain DSM 27085 / S26/3) (Chlamydophila abortus), this protein is Phosphoglycerate kinase.